Here is a 374-residue protein sequence, read N- to C-terminus: WAT1-related protein At1g60050 (374 aa).

10 helical membrane passes run 11-31 (IVPF…TILA), 42-62 (FVFI…YSFY), 82-102 (IFLL…LGLS), 107-127 (IVVC…SLAL), 145-165 (IGTL…GPFI), 194-214 (WALG…WNII), 228-248 (VVSA…AFME), 255-275 (ELKL…GSII), 292-312 (VPLF…SFFV), and 315-335 (LHYG…LIMW). Positions 26-155 (ALTILAKTAL…GTLICFTGAF (130 aa)) constitute an EamA domain.

This sequence belongs to the drug/metabolite transporter (DMT) superfamily. Plant drug/metabolite exporter (P-DME) (TC 2.A.7.4) family.

Its subcellular location is the membrane. The chain is WAT1-related protein At1g60050 from Arabidopsis thaliana (Mouse-ear cress).